Here is a 337-residue protein sequence, read N- to C-terminus: Vacuolar protein sorting-associated protein 26B-A (337 aa).

The tract at residues Arg313–Glu337 is disordered.

The protein belongs to the VPS26 family. Component of the heterotrimeric retromer cargo-selective complex (CSC) which is believed to associate with variable sorting nexins to form functionally distinct retromer complex variants.

The protein localises to the cytoplasm. It localises to the endosome membrane. It is found in the early endosome. Acts as a component of the retromer cargo-selective complex (CSC). The CSC is believed to be the core functional component of retromer or respective retromer complex variants acting to prevent missorting of selected transmembrane cargo proteins into the lysosomal degradation pathway. Retromer mediates retrograde transport of cargo proteins from endosomes to the trans-Golgi network (TGN). The sequence is that of Vacuolar protein sorting-associated protein 26B-A (vps26b-a) from Xenopus laevis (African clawed frog).